We begin with the raw amino-acid sequence, 347 residues long: GMP reductase (347 aa).

108-131 is an NADP(+) binding site; the sequence is ADFEKTKQILDLNPALNFVCIDVA. 2 residues coordinate K(+): G181 and G183. The Thioimidate intermediate role is filled by C186. 216-239 is an NADP(+) binding site; the sequence is IVSDGGCTTPGDVAKAFGGGADFV.

It belongs to the IMPDH/GMPR family. GuaC type 1 subfamily. As to quaternary structure, homotetramer.

The catalysed reaction is IMP + NH4(+) + NADP(+) = GMP + NADPH + 2 H(+). Catalyzes the irreversible NADPH-dependent deamination of GMP to IMP. It functions in the conversion of nucleobase, nucleoside and nucleotide derivatives of G to A nucleotides, and in maintaining the intracellular balance of A and G nucleotides. The protein is GMP reductase of Escherichia coli O139:H28 (strain E24377A / ETEC).